The following is a 475-amino-acid chain: Trifunctional enzyme subunit beta, mitochondrial (475 aa).

The transit peptide at 1-34 (MTTILTYPFKNLPTASKWALRFSIRPLSCSSQLR) directs the protein to the mitochondrion. K73 carries the post-translational modification N6-acetyllysine; alternate. K73 is subject to N6-succinyllysine; alternate. The Acyl-thioester intermediate role is filled by C139. An intramembrane segment occupies 174–221 (IRHSRKMRKLMLDLNKAKSMGQRLSLISKFRFNFLAPELPAVSEFSTS). K189 carries the post-translational modification N6-acetyllysine; alternate. The residue at position 189 (K189) is an N6-succinyllysine; alternate. 3 positions are modified to N6-succinyllysine: K191, K273, and K292. K294 is subject to N6-acetyllysine; alternate. K294 is subject to N6-succinyllysine; alternate. K299 carries the N6-acetyllysine modification. K333 carries the post-translational modification N6-acetyllysine; alternate. Residue K333 is modified to N6-succinyllysine; alternate. Residues K349 and K362 each carry the N6-acetyllysine modification. Catalysis depends on C459, which acts as the Proton donor/acceptor.

The protein belongs to the thiolase-like superfamily. Thiolase family. Heterotetramer of 2 alpha/HADHA and 2 beta/HADHB subunits; forms the mitochondrial trifunctional enzyme. Also purified as higher order heterooligomers including a 4 alpha/HADHA and 4 beta/HADHB heterooligomer which physiological significance remains unclear. The mitochondrial trifunctional enzyme interacts with MTLN. Interacts with RSAD2/viperin.

The protein resides in the mitochondrion. It localises to the mitochondrion inner membrane. It is found in the mitochondrion outer membrane. The protein localises to the endoplasmic reticulum. It catalyses the reaction an acyl-CoA + acetyl-CoA = a 3-oxoacyl-CoA + CoA. It carries out the reaction butanoyl-CoA + acetyl-CoA = 3-oxohexanoyl-CoA + CoA. The enzyme catalyses hexanoyl-CoA + acetyl-CoA = 3-oxooctanoyl-CoA + CoA. The catalysed reaction is octanoyl-CoA + acetyl-CoA = 3-oxodecanoyl-CoA + CoA. It catalyses the reaction decanoyl-CoA + acetyl-CoA = 3-oxododecanoyl-CoA + CoA. It carries out the reaction dodecanoyl-CoA + acetyl-CoA = 3-oxotetradecanoyl-CoA + CoA. The enzyme catalyses tetradecanoyl-CoA + acetyl-CoA = 3-oxohexadecanoyl-CoA + CoA. Its pathway is lipid metabolism; fatty acid beta-oxidation. Functionally, mitochondrial trifunctional enzyme catalyzes the last three of the four reactions of the mitochondrial beta-oxidation pathway. The mitochondrial beta-oxidation pathway is the major energy-producing process in tissues and is performed through four consecutive reactions breaking down fatty acids into acetyl-CoA. Among the enzymes involved in this pathway, the trifunctional enzyme exhibits specificity for long-chain fatty acids. Mitochondrial trifunctional enzyme is a heterotetrameric complex composed of two proteins, the trifunctional enzyme subunit alpha/HADHA carries the 2,3-enoyl-CoA hydratase and the 3-hydroxyacyl-CoA dehydrogenase activities, while the trifunctional enzyme subunit beta/HADHB described here bears the 3-ketoacyl-CoA thiolase activity. The sequence is that of Trifunctional enzyme subunit beta, mitochondrial (HADHB) from Pan troglodytes (Chimpanzee).